The following is a 767-amino-acid chain: Protein NLP3 (767 aa).

3 disordered regions span residues 462 to 494 (ATPPLTQEDPKGKQVSFSFSSASSLENRKRKTK), 590 to 622 (INPTQTVHVPPKSPPSSSGSQSSSGSSTCCSSE), and 646 to 672 (HEDQRPVRVTSSLPPLPSATTPRKAKD). Residues 482-566 (SASSLENRKR…MDSVEGVQGS (85 aa)) form the RWP-RK domain. Residues 485 to 506 (SLENRKRKTKAEKDITLDTLRQ) adopt a coiled-coil conformation. Composition is skewed to low complexity over residues 604–622 (PSSSGSQSSSGSSTCCSSE) and 655–667 (TSSLPPLPSATTP). One can recognise a PB1 domain in the interval 673-759 (GMKVKAMFGD…ETIRILVHHP (87 aa)).

The protein localises to the nucleus. Functionally, probable transcription factor. The protein is Protein NLP3 (NLP3) of Arabidopsis thaliana (Mouse-ear cress).